The primary structure comprises 165 residues: Nascent polypeptide-associated complex subunit beta (165 aa).

One can recognise an NAC-A/B domain in the interval 33-97 (TTDDKRLQST…PQTKKLQDIL (65 aa)). Residues 120 to 165 (QKQAPGAGDVPATIQEEDDDDDVPDLVVGETFETPATEEAPKAAAS) are disordered. The span at 134–143 (QEEDDDDDVP) shows a compositional bias: acidic residues. A compositionally biased stretch (low complexity) spans 144–165 (DLVVGETFETPATEEAPKAAAS).

Belongs to the NAC-beta family. As to quaternary structure, part of the nascent polypeptide-associated complex (NAC).

The polypeptide is Nascent polypeptide-associated complex subunit beta (Arabidopsis thaliana (Mouse-ear cress)).